A 186-amino-acid polypeptide reads, in one-letter code: Elongation factor P (186 aa).

Belongs to the elongation factor P family.

It is found in the cytoplasm. It participates in protein biosynthesis; polypeptide chain elongation. Involved in peptide bond synthesis. Stimulates efficient translation and peptide-bond synthesis on native or reconstituted 70S ribosomes in vitro. Probably functions indirectly by altering the affinity of the ribosome for aminoacyl-tRNA, thus increasing their reactivity as acceptors for peptidyl transferase. The sequence is that of Elongation factor P from Laribacter hongkongensis (strain HLHK9).